The chain runs to 160 residues: Eosinophil cationic protein (160 aa).

Residues 1-27 (MVPKLFTPQICLLLLLGLMGVEGSLHA) form the signal peptide. Residues 28-72 (RPPQFTKAQWFAIQHINVNPPRCTIAMRVINNYQRRCKNQNTFLR) are required for nearly all of the bactericidal activities; partially involved in LPS-binding. His-42 (proton acceptor) is an active-site residue. Disulfide bonds link Cys-50/Cys-110, Cys-64/Cys-123, Cys-82/Cys-138, and Cys-89/Cys-98. Residue Tyr-60 is modified to 3'-nitrotyrosine. 65–69 (KNQNT) contributes to the substrate binding site. 3 N-linked (GlcNAc...) asparagine glycosylation sites follow: Asn-84, Asn-92, and Asn-119. Catalysis depends on His-155, which acts as the Proton donor.

Belongs to the pancreatic ribonuclease family. Interacts with bacterial lipopolysaccharide (LPS) and lipoteichoic acid (LTA). In vitro interacts with phospholipid bilayers.

It localises to the secreted. Its function is as follows. Cytotoxin and helminthotoxin with low-efficiency ribonuclease activity. Possesses a wide variety of biological activities. Exhibits antibacterial activity. The protein is Eosinophil cationic protein (RNASE3) of Macaca nemestrina (Pig-tailed macaque).